The chain runs to 102 residues: Small ribosomal subunit protein uS10 (102 aa).

Belongs to the universal ribosomal protein uS10 family. As to quaternary structure, part of the 30S ribosomal subunit.

Functionally, involved in the binding of tRNA to the ribosomes. The chain is Small ribosomal subunit protein uS10 from Kineococcus radiotolerans (strain ATCC BAA-149 / DSM 14245 / SRS30216).